Here is a 506-residue protein sequence, read N- to C-terminus: Cationic amino acid transporter 8 (506 aa).

2 N-linked (GlcNAc...) asparagine glycosylation sites follow: Asn-2 and Asn-5. A helical transmembrane segment spans residues 38–58 (FYLLLIIIIYTATSACIYFDW). Asn-75 carries N-linked (GlcNAc...) asparagine glycosylation. The next 5 membrane-spanning stretches (helical) occupy residues 93-113 (NLYP…GFLY), 116-136 (IGPK…WIFL), 147-167 (LIGF…ILTV), 174-194 (ISTF…AVPA), and 211-231 (ICYG…TFLL). Asn-277 is a glycosylation site (N-linked (GlcNAc...) asparagine). The chain crosses the membrane as a helical span at residues 302 to 322 (ILLFFKVLLSYPSICIIVYFI). Asn-325 and Asn-342 each carry an N-linked (GlcNAc...) asparagine glycan. The next 4 helical transmembrane spans lie at 344–364 (SIIN…IIFG), 372–392 (AAII…TALI), 399–419 (LISA…IYCF), and 427–447 (VVFG…SLFC). Asn-453 and Asn-456 each carry an N-linked (GlcNAc...) asparagine glycan. A helical membrane pass occupies residues 466–486 (TISILLAISFIIMFLPLSILY).

The protein belongs to the SLC43A transporter (TC 2.A.1.44) family.

The protein localises to the cell membrane. In terms of biological role, cationic amino acid transporter which transports L-arginine, L-lysine and, to a lesser extent, L-histidine and ornithine. Plays an essential role in gametogenesis. This is Cationic amino acid transporter 8 from Plasmodium berghei (strain Anka).